A 516-amino-acid chain; its full sequence is Arginyl-tRNA--protein transferase 1 (516 aa).

Positions 150 to 180 (IESEEKEKEKSIKKEGSKEFIHPQSIEEKLG) are enriched in basic and acidic residues. Residues 150–206 (IESEEKEKEKSIKKEGSKEFIHPQSIEEKLGSGEPSHPIKVHIGPKPGKGADLSKPP) are disordered.

The protein belongs to the R-transferase family. As to quaternary structure, monomer. Interacts with LIAT1; LIAT1 is not a substrate of ATE1, the interaction takes place in the cytoplasm and seems to increase ATE1 arginyltransferase activity. In terms of assembly, interacts with LIAT1; has a higher affinity than the other isoforms. Widely expressed.

The protein resides in the nucleus. Its subcellular location is the cytoplasm. It catalyses the reaction an N-terminal L-alpha-aminoacyl-[protein] + L-arginyl-tRNA(Arg) = an N-terminal L-arginyl-L-aminoacyl-[protein] + tRNA(Arg) + H(+). In terms of biological role, involved in the post-translational conjugation of arginine to the N-terminal aspartate or glutamate of a protein. This arginylation is required for degradation of the protein via the ubiquitin pathway. Does not arginylate cysteine residues. In Mus musculus (Mouse), this protein is Arginyl-tRNA--protein transferase 1.